A 376-amino-acid polypeptide reads, in one-letter code: Putative F-box protein At1g30930 (376 aa).

In terms of domain architecture, F-box spans 1–44; the sequence is MKNSIPIDLIIEIVSRSTAKSVARCHCVSKQWRAIFRRKYFIEL.

The protein is Putative F-box protein At1g30930 of Arabidopsis thaliana (Mouse-ear cress).